Consider the following 169-residue polypeptide: uncharacterized protein (169 aa).

Residues 28-157 enclose the Nudix hydrolase domain; it reads ELHLVIHVCI…EFIPYFFLNQ (130 aa). Residues 65 to 87 carry the Nudix box motif; it reads AGSALKGETSQQAAEREVQEELG. The Mg(2+) site is built by Glu-81 and Glu-85.

The protein belongs to the Nudix hydrolase family. Mg(2+) serves as cofactor.

This is an uncharacterized protein from Listeria monocytogenes serovar 1/2a (strain ATCC BAA-679 / EGD-e).